A 1103-amino-acid chain; its full sequence is Centrosomal protein of 126 kDa (1103 aa).

Positions 1 to 12 (MLAGRPGAQSAG) are enriched in low complexity. Residues 1 to 36 (MLAGRPGAQSAGAGVGAGPPDAPGARDGGGRPRPGA) are disordered. Coiled coils occupy residues 43 to 116 (HLEK…FQRA) and 182 to 222 (QKHL…KLLE). Disordered regions lie at residues 380 to 409 (NTAE…ESPT) and 723 to 812 (ESKA…PGQS). The segment covering 723–735 (ESKAPVHASDSKT) has biased composition (basic and acidic residues). A compositionally biased stretch (basic residues) spans 736–748 (QKTKPQRGVKFTR). 2 stretches are compositionally biased toward polar residues: residues 763–784 (RKPT…QTQG) and 798–812 (NIKS…PGQS).

In terms of assembly, interacts with DCTN1.

The protein localises to the midbody. The protein resides in the cytoplasm. It is found in the cytoskeleton. It localises to the microtubule organizing center. Its subcellular location is the centrosome. The protein localises to the cilium basal body. Functionally, participate in cytokinesis. Necessary for microtubules and mitotic spindle organization. Involved in primary cilium formation. This chain is Centrosomal protein of 126 kDa, found in Mus musculus (Mouse).